The sequence spans 223 residues: Serum amyloid P-component (223 aa).

The signal sequence occupies residues 1–19; that stretch reads MDKMLFWVSVFTIFLDVFA. The Pentraxin (PTX) domain occupies 24-223; the sequence is DKKVFVFPRE…YVIIKPRVWD (200 aa). Cys55 and Cys114 form a disulfide bridge. Residues Asp77, Asn78, Glu155, Gln156, Asp157, and Gln167 each coordinate Ca(2+). Asn198 carries N-linked (GlcNAc...) asparagine glycosylation.

Belongs to the pentraxin family. In terms of assembly, homopentamer. Pentraxin (or pentaxin) have a discoid arrangement of 5 non-covalently bound subunits. It depends on Ca(2+) as a cofactor.

It is found in the secreted. The polypeptide is Serum amyloid P-component (PTX2) (Cavia porcellus (Guinea pig)).